Here is a 345-residue protein sequence, read N- to C-terminus: Biotin synthase (345 aa).

The 219-residue stretch at 38-256 folds into the Radical SAM core domain; that stretch reads RQVQVSTLLS…IAVARIMMPS (219 aa). Residues Cys-53, Cys-57, and Cys-60 each contribute to the [4Fe-4S] cluster site. The [2Fe-2S] cluster site is built by Cys-97, Cys-128, Cys-188, and Arg-260.

This sequence belongs to the radical SAM superfamily. Biotin synthase family. Homodimer. Requires [4Fe-4S] cluster as cofactor. [2Fe-2S] cluster is required as a cofactor.

It catalyses the reaction (4R,5S)-dethiobiotin + (sulfur carrier)-SH + 2 reduced [2Fe-2S]-[ferredoxin] + 2 S-adenosyl-L-methionine = (sulfur carrier)-H + biotin + 2 5'-deoxyadenosine + 2 L-methionine + 2 oxidized [2Fe-2S]-[ferredoxin]. The protein operates within cofactor biosynthesis; biotin biosynthesis; biotin from 7,8-diaminononanoate: step 2/2. Functionally, catalyzes the conversion of dethiobiotin (DTB) to biotin by the insertion of a sulfur atom into dethiobiotin via a radical-based mechanism. The sequence is that of Biotin synthase from Yersinia pestis bv. Antiqua (strain Antiqua).